A 952-amino-acid polypeptide reads, in one-letter code: Glycine dehydrogenase (decarboxylating) (952 aa).

N6-(pyridoxal phosphate)lysine is present on Lys-703.

The protein belongs to the GcvP family. As to quaternary structure, the glycine cleavage system is composed of four proteins: P, T, L and H. Pyridoxal 5'-phosphate serves as cofactor.

It carries out the reaction N(6)-[(R)-lipoyl]-L-lysyl-[glycine-cleavage complex H protein] + glycine + H(+) = N(6)-[(R)-S(8)-aminomethyldihydrolipoyl]-L-lysyl-[glycine-cleavage complex H protein] + CO2. The glycine cleavage system catalyzes the degradation of glycine. The P protein binds the alpha-amino group of glycine through its pyridoxal phosphate cofactor; CO(2) is released and the remaining methylamine moiety is then transferred to the lipoamide cofactor of the H protein. In Mycobacterium leprae (strain Br4923), this protein is Glycine dehydrogenase (decarboxylating).